Consider the following 81-residue polypeptide: Acyl carrier protein (81 aa).

Positions 4 to 79 (SEILEKVKAI…DVLDFINNKV (76 aa)) constitute a Carrier domain. Serine 39 bears the O-(pantetheine 4'-phosphoryl)serine mark.

Belongs to the acyl carrier protein (ACP) family. In terms of processing, 4'-phosphopantetheine is transferred from CoA to a specific serine of apo-ACP by AcpS. This modification is essential for activity because fatty acids are bound in thioester linkage to the sulfhydryl of the prosthetic group.

The protein resides in the cytoplasm. It participates in lipid metabolism; fatty acid biosynthesis. Carrier of the growing fatty acid chain in fatty acid biosynthesis. The polypeptide is Acyl carrier protein (Thermosynechococcus vestitus (strain NIES-2133 / IAM M-273 / BP-1)).